The primary structure comprises 130 residues: Small ribosomal subunit protein uS11 (130 aa).

The protein belongs to the universal ribosomal protein uS11 family. As to quaternary structure, part of the 30S ribosomal subunit. Interacts with proteins S7 and S18. Binds to IF-3.

Functionally, located on the platform of the 30S subunit, it bridges several disparate RNA helices of the 16S rRNA. Forms part of the Shine-Dalgarno cleft in the 70S ribosome. The sequence is that of Small ribosomal subunit protein uS11 from Dehalococcoides mccartyi (strain ATCC BAA-2266 / KCTC 15142 / 195) (Dehalococcoides ethenogenes (strain 195)).